We begin with the raw amino-acid sequence, 491 residues long: MVCLFENLMNMIKYSIYILPLIILIVLSISIKKDVQRVHIIIQSLKLTLIVIMIVIGIEESIYVKLNGHLIKTELIKLFEYLLLGVSYMIIKMFEEGVTEGKKTKITDEGLILIYSSIIGMLISMEAHNLITLFLSLEISSICFYILALNKNSRKGIEGGLKYYIIGGIATTILLLGIVSIYKSTGSLMYTDLLVIVMENTDDYRIQMGIALIVLGLILKLGIAPFHGWLIDVYEGAGMLMTFYLTITQKLVTLMVLINLYQNLIIYTNAIMFTNGLIILILVTLVVGTIGSLRQQKLIRFIAYSAIVNSALLILMLAGSMSEELMVNSVYYLINYIIGLTVLMSLIMGFLRLNDRGTIEDIYQLKNMWVINMFGAIVYILVLMYLAGLPPMTNFISKILILLPYMVLGRVYLTMLAFFLSVGVMIYYMNLVKIIIIDKVQTHEQGVAELEITSKPTKGGRRIVLGVMWLIFSQLYLDEILNVIKVIVALI.

Helical transmembrane passes span 11–31 (MIKYSIYILPLIILIVLSISI), 38–58 (VHIIIQSLKLTLIVIMIVIGI), 74–94 (ELIKLFEYLLLGVSYMIIKMF), 106–126 (ITDEGLILIYSSIIGMLISME), 129–149 (NLITLFLSLEISSICFYILAL), 161–181 (LKYYIIGGIATTILLLGIVSI), 210–230 (IALIVLGLILKLGIAPFHGWL), 238–258 (GMLMTFYLTITQKLVTLMVLI), 270–290 (AIMFTNGLIILILVTLVVGTI), 298–318 (LIRFIAYSAIVNSALLILMLA), 330–350 (VYYLINYIIGLTVLMSLIMGF), 375–395 (GAIVYILVLMYLAGLPPMTNF), 411–433 (VYLTMLAFFLSVGVMIYYMNLVK), and 463–483 (IVLGVMWLIFSQLYLDEILNV).

It belongs to the complex I subunit 2 family.

The protein resides in the mitochondrion inner membrane. The enzyme catalyses a ubiquinone + NADH + 5 H(+)(in) = a ubiquinol + NAD(+) + 4 H(+)(out). Its function is as follows. Core subunit of the mitochondrial membrane respiratory chain NADH dehydrogenase (Complex I) that is believed to belong to the minimal assembly required for catalysis. Complex I functions in the transfer of electrons from NADH to the respiratory chain. The immediate electron acceptor for the enzyme is believed to be ubiquinone. The polypeptide is NADH-ubiquinone oxidoreductase chain 2 (nad2) (Dictyostelium citrinum (Slime mold)).